Consider the following 274-residue polypeptide: 23S rRNA (adenosine(1067)-2'-O)-methyltransferase (274 aa).

S-adenosyl-L-methionine contacts are provided by residues R165, L195, 218–220 (GSE), 238–240 (IPM), and 247–252 (LNVSVS).

This sequence belongs to the class IV-like SAM-binding methyltransferase superfamily. RNA methyltransferase TsnR/AvirB family. As to quaternary structure, homodimer.

It carries out the reaction adenosine(1067) in 23S rRNA + S-adenosyl-L-methionine = 2'-O-methyladenosine(1067) in 23S rRNA + S-adenosyl-L-homocysteine + H(+). In terms of biological role, specifically methylates the adenosine-1067 in 23S ribosomal RNA. Confers resistance to antibiotic nosiheptide. This Streptomyces actuosus protein is 23S rRNA (adenosine(1067)-2'-O)-methyltransferase.